The chain runs to 62 residues: Photosystem II reaction center protein Z (62 aa).

A run of 2 helical transmembrane segments spans residues 8 to 28 (ALLALIFVSFALVVGVPVVFA) and 41 to 61 (FSGLSLWLLLVFVVGILNSFV).

The protein belongs to the PsbZ family. PSII is composed of 1 copy each of membrane proteins PsbA, PsbB, PsbC, PsbD, PsbE, PsbF, PsbH, PsbI, PsbJ, PsbK, PsbL, PsbM, PsbT, PsbY, PsbZ, Psb30/Ycf12, at least 3 peripheral proteins of the oxygen-evolving complex and a large number of cofactors. It forms dimeric complexes.

The protein localises to the plastid. It localises to the chloroplast thylakoid membrane. Its function is as follows. Controls the interaction of photosystem II (PSII) cores with the light-harvesting antenna, aiding in the dissipation of excitation energy within PSII. PSII is a light-driven water plastoquinone oxidoreductase, using light energy to abstract electrons from H(2)O, generating a proton gradient subsequently used for ATP formation. This chain is Photosystem II reaction center protein Z, found in Chlamydomonas reinhardtii (Chlamydomonas smithii).